Consider the following 376-residue polypeptide: 23S rRNA (uracil(747)-C(5))-methyltransferase RlmC (376 aa).

Residues cysteine 3, cysteine 11, cysteine 14, and cysteine 88 each contribute to the [4Fe-4S] cluster site. The S-adenosyl-L-methionine site is built by glutamine 213, phenylalanine 242, glutamate 263, and asparagine 308. The active-site Nucleophile is cysteine 335.

The protein belongs to the class I-like SAM-binding methyltransferase superfamily. RNA M5U methyltransferase family. RlmC subfamily.

It catalyses the reaction uridine(747) in 23S rRNA + S-adenosyl-L-methionine = 5-methyluridine(747) in 23S rRNA + S-adenosyl-L-homocysteine + H(+). Catalyzes the formation of 5-methyl-uridine at position 747 (m5U747) in 23S rRNA. This Vibrio vulnificus (strain CMCP6) protein is 23S rRNA (uracil(747)-C(5))-methyltransferase RlmC.